The following is an 84-amino-acid chain: Putative membrane protein insertion efficiency factor (84 aa).

The segment at 63-84 (WGGSGYDPVPGADPEHDRRPRG) is disordered. Residues 75 to 84 (DPEHDRRPRG) show a composition bias toward basic and acidic residues.

The protein belongs to the UPF0161 family.

The protein localises to the cell inner membrane. In terms of biological role, could be involved in insertion of integral membrane proteins into the membrane. This is Putative membrane protein insertion efficiency factor from Cereibacter sphaeroides (strain ATCC 17025 / ATH 2.4.3) (Rhodobacter sphaeroides).